Consider the following 148-residue polypeptide: UPF0756 membrane protein YeaL (148 aa).

Helical transmembrane passes span 14-34, 51-71, 86-106, and 121-141; these read ALGF…LIIV, LTVG…SGTL, LVAI…VALM, and VLGV…AGLV.

The protein belongs to the UPF0756 family.

The protein localises to the cell membrane. The chain is UPF0756 membrane protein YeaL from Salmonella arizonae (strain ATCC BAA-731 / CDC346-86 / RSK2980).